The chain runs to 180 residues: Large ribosomal subunit protein uL6c (180 aa).

This sequence belongs to the universal ribosomal protein uL6 family. In terms of assembly, part of the 50S ribosomal subunit.

It is found in the plastid. It localises to the chloroplast. Functionally, binds 23S rRNA. The chain is Large ribosomal subunit protein uL6c (rpl6) from Porphyra purpurea (Red seaweed).